We begin with the raw amino-acid sequence, 514 residues long: Cytochrome P450 monooxygenase FUS8 (514 aa).

The chain crosses the membrane as a helical span at residues V24–V44. N-linked (GlcNAc...) asparagine glycosylation is found at N225 and N443. Position 460 (C460) interacts with heme.

The protein belongs to the cytochrome P450 family. Heme is required as a cofactor.

The protein localises to the membrane. Its pathway is mycotoxin biosynthesis. In terms of biological role, cytochrome P450 monooxygenase; part of the gene cluster that mediates the biosynthesis of the mycotoxin fusarin C. Within the cluster, FUS1, FUS2, FUS8 and FUS9 are sufficient for fusarin production. The roles of the other FUS members are yet undetermined. The fusarin C synthetase FUS1 is responsible for the condensation of one acetyl-coenzyme A (CoA) unit with six malonyl-CoA units and the amide linkage of the arising heptaketide and homoserine, subsequently releasing the first intermediate, prefusarin, as an alcohol with an open ring structure. The cytochrome P450 monooxygenase FUS8 participates in multiple oxidation processes at carbon C-20 and is able to use the FUS1 product as substrate, resulting in formation of 20-hydroxy-prefusarin. This reaction seems to be essential before the 2-pyrrolidone ring closure can be catalyzed by FUS2, generating 20-hydroxy-fusarin. FUS8 is able to further oxidizes carbon C-20 after ring closure, resulting in the formation of carboxy-fusarin C. As the last step, FUS9 methylates the hydroxyl group at C-21 to generate fusarin C. Fusarin C can then rearrange to epi-fusarin C, the (z)-isomers, and fusarin A and fusarin D. This chain is Cytochrome P450 monooxygenase FUS8, found in Gibberella fujikuroi (strain CBS 195.34 / IMI 58289 / NRRL A-6831) (Bakanae and foot rot disease fungus).